We begin with the raw amino-acid sequence, 234 residues long: Large ribosomal subunit protein uL1 (234 aa).

Belongs to the universal ribosomal protein uL1 family. In terms of assembly, part of the 50S ribosomal subunit.

Its function is as follows. Binds directly to 23S rRNA. The L1 stalk is quite mobile in the ribosome, and is involved in E site tRNA release. In terms of biological role, protein L1 is also a translational repressor protein, it controls the translation of the L11 operon by binding to its mRNA. In Campylobacter fetus subsp. fetus (strain 82-40), this protein is Large ribosomal subunit protein uL1.